We begin with the raw amino-acid sequence, 299 residues long: Ficolin-3 (299 aa).

The N-terminal stretch at 1–23 (MDLLWILPSLWLLLLGGPACLKT) is a signal peptide. Positions 44-81 (PSCPGAPGSPGEKGAPGPQGPPGPPGKMGPKGEPGDPV) are disordered. The 33-residue stretch at 48 to 80 (GAPGSPGEKGAPGPQGPPGPPGKMGPKGEPGDP) folds into the Collagen-like domain. 6 positions are modified to hydroxyproline: proline 50, proline 53, proline 59, proline 65, proline 68, and proline 77. Positions 61–70 (PQGPPGPPGK) are enriched in pro residues. The region spanning 84-299 (LRCQEGPRNC…PYRRVRMMLR (216 aa)) is the Fibrinogen C-terminal domain. 2 cysteine pairs are disulfide-bonded: cysteine 86-cysteine 110 and cysteine 93-cysteine 121. An N-linked (GlcNAc...) (complex) asparagine glycan is attached at asparagine 189. Ca(2+) contacts are provided by aspartate 237, aspartate 239, serine 241, and serine 243. Cysteine 245 and cysteine 258 are joined by a disulfide. An a carbohydrate-binding site is contributed by 258–259 (CY).

The protein belongs to the ficolin lectin family. In terms of assembly, homotrimer. May form an octadecamer consisting of an elementary trimer unit. Does not interact with fibronectin, elastin or zymosan. Interacts with MASP1 and MASP2. In terms of processing, the N-terminus is blocked. In terms of tissue distribution, liver and lung. In liver it is produced by bile duct epithelial cells and hepatocytes. In lung it is produced by both ciliated bronchial epithelial cells and type II alveolar epithelial cells.

Its subcellular location is the secreted. Its function is as follows. May function in innate immunity through activation of the lectin complement pathway. Calcium-dependent and GlcNAc-binding lectin. Has affinity with GalNAc, GlcNAc, D-fucose, as mono/oligosaccharide and lipopolysaccharides from S.typhimurium and S.minnesota. This Homo sapiens (Human) protein is Ficolin-3 (FCN3).